We begin with the raw amino-acid sequence, 303 residues long: Glucose-1-phosphate thymidylyltransferase (303 aa).

Mg(2+) contacts are provided by aspartate 108 and aspartate 222.

Belongs to the glucose-1-phosphate thymidylyltransferase family. Mg(2+) is required as a cofactor.

The catalysed reaction is dTTP + alpha-D-glucose 1-phosphate + H(+) = dTDP-alpha-D-glucose + diphosphate. Its function is as follows. Catalyzes the formation of dTDP-glucose, from dTTP and glucose 1-phosphate, as well as its pyrophosphorolysis. In terms of biological role, probably involved in the biosynthesis of the acarviose moiety of the alpha-glucosidase inhibitor acarbose. In Actinoplanes sp. (strain ATCC 31044 / CBS 674.73 / SE50/110), this protein is Glucose-1-phosphate thymidylyltransferase (acbA).